We begin with the raw amino-acid sequence, 317 residues long: Serine/threonine-protein phosphatase PP1 isozyme 1 (317 aa).

Residues Asp-75, His-77, Asp-103, and Asn-135 each coordinate Mn(2+). His-136 (proton donor) is an active-site residue. Positions 184 and 259 each coordinate Mn(2+).

The protein belongs to the PPP phosphatase family. PP-1 subfamily. Mn(2+) serves as cofactor.

It carries out the reaction O-phospho-L-seryl-[protein] + H2O = L-seryl-[protein] + phosphate. The enzyme catalyses O-phospho-L-threonyl-[protein] + H2O = L-threonyl-[protein] + phosphate. The sequence is that of Serine/threonine-protein phosphatase PP1 isozyme 1 (NPP1) from Nicotiana tabacum (Common tobacco).